An 852-amino-acid chain; its full sequence is Disks large homolog 2 (852 aa).

Residues C5 and C7 are each lipidated (S-palmitoyl cysteine). S28 carries the post-translational modification Phosphoserine. Position 58 is a phosphotyrosine (Y58). At S65 the chain carries Phosphoserine. 2 PDZ domains span residues 98-185 and 193-280; these read EITL…RRRR and EIKL…GKPT. S307, S328, S360, S365, S406, and S414 each carry phosphoserine. Positions 421-502 constitute a PDZ 3 domain; the sequence is KVVLHKGSTG…TVTIIAQYQP (82 aa). Y505 carries the phosphotyrosine modification. Phosphoserine is present on residues S528, S530, and S553. The SH3 domain maps to 536-606; it reads KRSLYVRAMF…PSKRRVERKE (71 aa). The Guanylate kinase-like domain maps to 662–837; the sequence is TRPVIILGPM…IYNQCKLVIE (176 aa). Residues Y732 and Y737 each carry the phosphotyrosine modification.

Interacts with NOS1/nNOS through second PDZ domain. Interacts with KCNJ2/Kir2.1 (via C-terminus) through one of its PDZ domains. Interacts with KCNJ4. Interacts with FRMPD4 (via C-terminus). Interacts through its PDZ domains with NETO1. Interacts with LRFN1, LRFN2 and LRFN4. Interacts with FASLG. Interacts with KCNJ4. Interacts with ADAM22. Interacts with DGKI (via PDZ-binding motif). Palmitoylation of isoform 1 and isoform 2 is not required for targeting to postsynaptic density. Brain. Highest levels of isoform 1 in cortex, olfactory bulb, thalamus, hypothalamus, striatum and hippocampus. Highest level of isoform 2 in olfactory bulb. Reduced levels in cortex and hippocampus. Highest level of isoform 4 in spinal cord. Low levels of isoform 4, isoform 6, and isoform 7 in superior cervical ganglion.

The protein localises to the cell membrane. It is found in the postsynaptic density. The protein resides in the synapse. It localises to the membrane. Its subcellular location is the cell projection. The protein localises to the axon. It is found in the perikaryon. In terms of biological role, required for perception of chronic pain through NMDA receptor signaling. Regulates surface expression of NMDA receptors in dorsal horn neurons of the spinal cord. Interacts with the cytoplasmic tail of NMDA receptor subunits as well as inward rectifying potassium channels. Involved in regulation of synaptic stability at cholinergic synapses. Part of the postsynaptic protein scaffold of excitatory synapses. The sequence is that of Disks large homolog 2 (Dlg2) from Mus musculus (Mouse).